We begin with the raw amino-acid sequence, 258 residues long: Microtubule-associated protein RP/EB family member 1 (258 aa).

The Calponin-homology (CH) domain occupies Asn14–Asp116. Positions Lys175–Ile245 constitute an EB1 C-terminal domain.

It belongs to the MAPRE family.

The protein resides in the cytoplasm. It is found in the cytoskeleton. It localises to the microtubule organizing center. Its subcellular location is the centrosome. The protein localises to the golgi apparatus. The protein resides in the spindle. It is found in the spindle pole. Its function is as follows. Plus-end tracking protein (+TIP) that binds to the plus-end of microtubules and regulates the dynamics of the microtubule cytoskeleton. Promotes cytoplasmic microtubule nucleation and elongation. Involved in mitotic spindle positioning by stabilizing microtubules and promoting dynamic connection between astral microtubules and the cortex during mitotic chromosome segregation. The sequence is that of Microtubule-associated protein RP/EB family member 1 (MAPRE1) from Gallus gallus (Chicken).